The primary structure comprises 332 residues: uncharacterized protein (332 aa).

Residues 159-256 form a disordered region; sequence PLEISGRGGN…PRPHPWGPGP (98 aa). Over residues 201–231 the composition is skewed to pro residues; it reads RPPSPRPPSPRPPHPRPPSPRPPHPRPPSPR.

The protein localises to the virion. This is an uncharacterized protein from Acanthamoeba polyphaga (Amoeba).